The primary structure comprises 214 residues: uncharacterized protein (214 aa).

The signal sequence occupies residues 1–17; it reads MWCFIVFLTIFLPTLEG. Asn88 and Asn139 each carry an N-linked (GlcNAc...) asparagine glycan.

In terms of tissue distribution, component of the acid-insoluble organic matrix of calcified layers of the shell (at protein level).

Its subcellular location is the secreted. This is an uncharacterized protein from Lottia gigantea (Giant owl limpet).